Consider the following 271-residue polypeptide: Orotidine 5'-phosphate decarboxylase (271 aa).

The active-site Proton donor is the Lys-95.

It belongs to the OMP decarboxylase family. Type 2 subfamily.

It catalyses the reaction orotidine 5'-phosphate + H(+) = UMP + CO2. Its pathway is pyrimidine metabolism; UMP biosynthesis via de novo pathway; UMP from orotate: step 2/2. The protein is Orotidine 5'-phosphate decarboxylase of Aromatoleum aromaticum (strain DSM 19018 / LMG 30748 / EbN1) (Azoarcus sp. (strain EbN1)).